The sequence spans 85 residues: Large ribosomal subunit protein bL27 (85 aa).

The segment at 1-21 is disordered; that stretch reads MAHKKGASSSRNGRDSNAQRL. Positions 7 to 19 are enriched in polar residues; it reads ASSSRNGRDSNAQ.

It belongs to the bacterial ribosomal protein bL27 family.

This chain is Large ribosomal subunit protein bL27, found in Beutenbergia cavernae (strain ATCC BAA-8 / DSM 12333 / CCUG 43141 / JCM 11478 / NBRC 16432 / NCIMB 13614 / HKI 0122).